The chain runs to 144 residues: Large ribosomal subunit protein uL13 (144 aa).

This sequence belongs to the universal ribosomal protein uL13 family. As to quaternary structure, part of the 50S ribosomal subunit.

Functionally, this protein is one of the early assembly proteins of the 50S ribosomal subunit, although it is not seen to bind rRNA by itself. It is important during the early stages of 50S assembly. This is Large ribosomal subunit protein uL13 from Clostridium botulinum (strain ATCC 19397 / Type A).